Here is a 1134-residue protein sequence, read N- to C-terminus: Error-prone DNA polymerase (1134 aa).

The segment at 1–33 (MSYHNPPIPWRELEGRISGRPAPHGHQESHADQ) is disordered.

The protein belongs to the DNA polymerase type-C family. DnaE2 subfamily.

It localises to the cytoplasm. It catalyses the reaction DNA(n) + a 2'-deoxyribonucleoside 5'-triphosphate = DNA(n+1) + diphosphate. Its function is as follows. DNA polymerase involved in damage-induced mutagenesis and translesion synthesis (TLS). It is not the major replicative DNA polymerase. In Cutibacterium acnes (strain DSM 16379 / KPA171202) (Propionibacterium acnes), this protein is Error-prone DNA polymerase.